The sequence spans 177 residues: Large ribosomal subunit protein uL6 (177 aa).

This sequence belongs to the universal ribosomal protein uL6 family. Part of the 50S ribosomal subunit.

Functionally, this protein binds to the 23S rRNA, and is important in its secondary structure. It is located near the subunit interface in the base of the L7/L12 stalk, and near the tRNA binding site of the peptidyltransferase center. This is Large ribosomal subunit protein uL6 from Yersinia enterocolitica serotype O:8 / biotype 1B (strain NCTC 13174 / 8081).